We begin with the raw amino-acid sequence, 374 residues long: MKTKKMILVDKVFYEKILSVESFKENIITQSAIPKISNKEVRLISSGSKIFYAINNTSPHSHVQLRLNRFFLSHIPLNSAAKAFVRGGSYLKYLEPHIYGSSYCRLDISSFFNNISFDDVKQSLSPYIKDEYLIGTEQKLIDAILNSVGYESPIRKDKGMIIPMGFRTSPAISNIVFRKMDLLIQDFCAKKGVIYSRYADDMLFSNPRESKLLMSDYFIDEISSLLSIMGFNINQSKYISREKEISINGYVIENKGGNGSIGTIRLSKSKLNTVLKVTHALAQNIPYKNICNKYIKVRLKEKNIKYESKKDEFEKKYYRDQLINYLGGYRSYLISLVKFHSEYKCVNSDFIIQINGILNDIQNHIQKIKKNRRL.

The Reverse transcriptase domain maps to 25-252; that stretch reads ENIITQSAIP…KEISINGYVI (228 aa). Mg(2+) is bound by residues D107, D200, and D201.

The protein belongs to the bacterial reverse transcriptase family.

It carries out the reaction DNA(n) + a 2'-deoxyribonucleoside 5'-triphosphate = DNA(n+1) + diphosphate. Functionally, reverse transcriptase (RT) component of antiviral defense system retron Eco8, composed of this RT, the following endonuclease and a non-coding RNA (ncRNA) encoded between them. Expression of retron Eco8 confers protection against bacteriophages T4, T6, T7 and SECphi4, SECphi6 and SECphi18. At multiplicity of infection (MOI) of 0.02 cultures slow growth when infected with SECphi4 but do not collapse, at MOI 2 cultures collapse. Responsible for synthesis of msDNA (a branched molecule with RNA linked by a 2',5'-phosphodiester bond to ssDNA). The retron transcript serves as primer (from a conserved internal G residue) and template for the reaction, and codes for the RT. This chain is Retron Eco8 reverse transcriptase, found in Escherichia coli.